The sequence spans 174 residues: Gamma-crystallin D (174 aa).

Beta/gamma crystallin 'Greek key' domains are found at residues 2-40 (GKIT…RVDS) and 41-83 (GCWM…RIIP). The tract at residues 84-87 (YSGS) is connecting peptide. Beta/gamma crystallin 'Greek key' domains follow at residues 88–128 (HKMR…NVLD) and 129–171 (GCWI…RRVI).

The protein belongs to the beta/gamma-crystallin family. Monomer.

Its function is as follows. Crystallins are the dominant structural components of the vertebrate eye lens. This is Gamma-crystallin D (CRYGD) from Macropus fuliginosus (Western gray kangaroo).